We begin with the raw amino-acid sequence, 503 residues long: Probable cytosol aminopeptidase (503 aa).

The Mn(2+) site is built by K274 and D279. Residue K286 is part of the active site. Mn(2+) is bound by residues D297, D356, and E358. Residue R360 is part of the active site.

Belongs to the peptidase M17 family. Mn(2+) serves as cofactor.

The protein resides in the cytoplasm. The catalysed reaction is Release of an N-terminal amino acid, Xaa-|-Yaa-, in which Xaa is preferably Leu, but may be other amino acids including Pro although not Arg or Lys, and Yaa may be Pro. Amino acid amides and methyl esters are also readily hydrolyzed, but rates on arylamides are exceedingly low.. It carries out the reaction Release of an N-terminal amino acid, preferentially leucine, but not glutamic or aspartic acids.. Its function is as follows. Presumably involved in the processing and regular turnover of intracellular proteins. Catalyzes the removal of unsubstituted N-terminal amino acids from various peptides. In Burkholderia pseudomallei (strain 1106a), this protein is Probable cytosol aminopeptidase.